The sequence spans 340 residues: GTP 3',8-cyclase (340 aa).

The Radical SAM core domain maps to 20-246; it reads RFERQYVYLR…PKALSDGPAK (227 aa). Arginine 29 serves as a coordination point for GTP. 2 residues coordinate [4Fe-4S] cluster: cysteine 36 and cysteine 40. Tyrosine 42 lines the S-adenosyl-L-methionine pocket. Cysteine 43 is a binding site for [4Fe-4S] cluster. Residue arginine 79 participates in GTP binding. S-adenosyl-L-methionine is bound at residue glycine 83. Threonine 110 is a binding site for GTP. Serine 134 is a binding site for S-adenosyl-L-methionine. A GTP-binding site is contributed by lysine 171. Methionine 205 is an S-adenosyl-L-methionine binding site. The [4Fe-4S] cluster site is built by cysteine 268 and cysteine 271. 273 to 275 provides a ligand contact to GTP; it reads RLR. Cysteine 285 provides a ligand contact to [4Fe-4S] cluster.

It belongs to the radical SAM superfamily. MoaA family. In terms of assembly, monomer and homodimer. Requires [4Fe-4S] cluster as cofactor.

It catalyses the reaction GTP + AH2 + S-adenosyl-L-methionine = (8S)-3',8-cyclo-7,8-dihydroguanosine 5'-triphosphate + 5'-deoxyadenosine + L-methionine + A + H(+). The protein operates within cofactor biosynthesis; molybdopterin biosynthesis. Functionally, catalyzes the cyclization of GTP to (8S)-3',8-cyclo-7,8-dihydroguanosine 5'-triphosphate. The sequence is that of GTP 3',8-cyclase from Actinobacillus pleuropneumoniae serotype 5b (strain L20).